The following is a 116-amino-acid chain: Helper of Tim protein 13 (116 aa).

The CHY-type; degenerate zinc finger occupies 10-94 (TVDDQSRCVH…SNLICPNCRS (85 aa)). Cys17, His19, Cys40, Cys43, Cys68, Cys71, Cys89, and Cys92 together coordinate Zn(2+).

In terms of assembly, interacts with the small Tim proteins TIM8, TIM9, TIM10, TIM12, and TIM13.

It localises to the mitochondrion intermembrane space. The protein localises to the mitochondrion membrane. Functionally, required for the assembly or recycling of the small Tim proteins in the mitochondrial intermembrane, thereby participating in the import and insertion of multi-pass transmembrane proteins into the mitochondrial inner membrane. Probably acts by facilitating the formation of disulfide bonds in small Tim proteins. The polypeptide is Helper of Tim protein 13 (HOT13) (Saccharomyces cerevisiae (strain ATCC 204508 / S288c) (Baker's yeast)).